Here is a 302-residue protein sequence, read N- to C-terminus: Protein FdhE homolog (302 aa).

The protein belongs to the FdhE family.

The protein resides in the cytoplasm. Its function is as follows. Necessary for formate dehydrogenase activity. This is Protein FdhE homolog from Shewanella oneidensis (strain ATCC 700550 / JCM 31522 / CIP 106686 / LMG 19005 / NCIMB 14063 / MR-1).